The sequence spans 224 residues: Small ribosomal subunit protein uS3 (224 aa).

The region spanning Leu20–Pro89 is the KH type-2 domain.

The protein belongs to the universal ribosomal protein uS3 family. Part of the 30S ribosomal subunit.

Binds the lower part of the 30S subunit head. The protein is Small ribosomal subunit protein uS3 of Staphylothermus marinus (strain ATCC 43588 / DSM 3639 / JCM 9404 / F1).